We begin with the raw amino-acid sequence, 59 residues long: U-reduvitoxin-Pr6a (59 aa).

The N-terminal stretch at methionine 1–glycine 19 is a signal peptide. Disulfide bonds link cysteine 31-cysteine 46, cysteine 38-cysteine 51, and cysteine 45-cysteine 58.

It belongs to the venom Ptu1-like knottin family. Expressed by the venom gland.

It localises to the secreted. Functionally, binds reversibly and blocks P/Q-type voltage-gated calcium channels (Cav). The protein is U-reduvitoxin-Pr6a of Platymeris rhadamanthus (Red spot assassin bug).